We begin with the raw amino-acid sequence, 137 residues long: Ribosomal RNA large subunit methyltransferase H (137 aa).

S-adenosyl-L-methionine-binding positions include leucine 56, glycine 85, and 104 to 109 (LSPLTF).

Belongs to the RNA methyltransferase RlmH family. As to quaternary structure, homodimer.

The protein resides in the cytoplasm. It catalyses the reaction pseudouridine(1915) in 23S rRNA + S-adenosyl-L-methionine = N(3)-methylpseudouridine(1915) in 23S rRNA + S-adenosyl-L-homocysteine + H(+). Functionally, specifically methylates the pseudouridine at position 1915 (m3Psi1915) in 23S rRNA. The protein is Ribosomal RNA large subunit methyltransferase H of Prochlorococcus marinus (strain MIT 9515).